The chain runs to 515 residues: Fatty acyl-CoA reductase 2 (515 aa).

Topologically, residues 1-464 (MSTIAAFYGG…KAKQRLKRLR (464 aa)) are cytoplasmic. The chain crosses the membrane as a helical span at residues 465–484 (NIHYLFNTALFLIAWRLLIA). The Peroxisomal portion of the chain corresponds to 485–515 (RSQMARNVWFFIVSFCYKFLSYFRASSTLKV).

It belongs to the fatty acyl-CoA reductase family.

The protein localises to the peroxisome membrane. It catalyses the reaction a long-chain fatty acyl-CoA + 2 NADPH + 2 H(+) = a long-chain primary fatty alcohol + 2 NADP(+) + CoA. The catalysed reaction is a very long-chain fatty acyl-CoA + 2 NADPH + 2 H(+) = a very long-chain primary fatty alcohol + 2 NADP(+) + CoA. The enzyme catalyses an ultra-long-chain fatty acyl-CoA + 2 NADPH + 2 H(+) = an ultra long-chain primary fatty alcohol + 2 NADP(+) + CoA. It carries out the reaction hexadecanoyl-CoA + 2 NADPH + 2 H(+) = hexadecan-1-ol + 2 NADP(+) + CoA. It catalyses the reaction octadecanoyl-CoA + 2 NADPH + 2 H(+) = octadecan-1-ol + 2 NADP(+) + CoA. The catalysed reaction is eicosanoyl-CoA + 2 NADPH + 2 H(+) = eicosan-1-ol + 2 NADP(+) + CoA. The enzyme catalyses docosanoyl-CoA + 2 NADPH + 2 H(+) = docosan-1-ol + 2 NADP(+) + CoA. It carries out the reaction tetracosanoyl-CoA + 2 NADPH + 2 H(+) = tetracosan-1-ol + 2 NADP(+) + CoA. It catalyses the reaction hexacosanoyl-CoA + 2 NADPH + 2 H(+) = hexacosan-1-ol + 2 NADP(+) + CoA. The catalysed reaction is octacosanoyl-CoA + 2 NADPH + 2 H(+) = octacosan-1-ol + 2 NADP(+) + CoA. The enzyme catalyses triacontanoyl-CoA + 2 NADPH + 2 H(+) = triacontan-1-ol + 2 NADP(+) + CoA. It carries out the reaction 18-methylnonadecanoyl-CoA + 2 NADPH + 2 H(+) = 18-methylnonadecan-1-ol + 2 NADP(+) + CoA. It catalyses the reaction 20-methylheneicosanoyl-CoA + 2 NADPH + 2 H(+) = 20-methylheneicosan-1-ol + 2 NADP(+) + CoA. The catalysed reaction is 22-methyltricosanoyl-CoA + 2 NADPH + 2 H(+) = 22-methyltricosan-1-ol + 2 NADP(+) + CoA. The enzyme catalyses 24-methylpentacosanoyl-CoA + 2 NADPH + 2 H(+) = 24-methylpentacosan-1-ol + 2 NADP(+) + CoA. In terms of biological role, catalyzes the reduction of saturated but not unsaturated C16 or C18 fatty acyl-CoA to fatty alcohols (FAls). A lower activity can be observed with shorter fatty acyl-CoA substrates. Can produce very long-chain and ultra long-chain FAls, regardless of whether they have a straight or branched chain. Involved in the production of ether lipids/plasmalogens and wax monoesters whose synthesis requires FAls as substrates. This chain is Fatty acyl-CoA reductase 2, found in Homo sapiens (Human).